Reading from the N-terminus, the 229-residue chain is MLSGLIQRFEEEKMKHNQDRVEELSLVRVDDTISQPPRYAPSAPMPSSMPTVALEILDKAMSNTTGATQTQKAEKAAFASYAEAFRDDVRLRQIKRHVNEQILPKLKSDLSELKKKRAIIHTTLLVAAVVALLTSVCTLSSDMSVAFKINGTKTEVPSWFKSLNPMLGVVNLGATFLMMVCAKSERALNQQIDMIKKEVMKKQSYNDAVRMSFTEFSSIPLDGFEMPLT.

Residues 14 to 26 form a CCM-I region; the sequence is MKHNQDRVEELSL. Residues 94 to 116 are CCM-III; sequence IKRHVNEQILPKLKSDLSELKKK. Transmembrane regions (helical) follow at residues 119 to 139 and 162 to 182; these read IIHT…VCTL and SLNP…MVCA. The CCM-II stretch occupies residues 185 to 198; sequence ERALNQQIDMIKKE.

It belongs to the orbivirus NS3 family. In terms of assembly, forms homooligomers via coiled-coil motif. Interacts with host OPTN; this interaction inhibits innate immune response.

Its subcellular location is the host cell membrane. The protein resides in the host Golgi apparatus. Its function is as follows. Plays a role in the inhibition of host innate immune response. Interacts with host OPTN and thus inhibits the recruitment of TBK1 to the host Golgi apparatus. In turn, downstream partner IRF3 cannot be activated and IFN-beta production is impaired. In terms of biological role, facilitates viral particle release either by increasing plasma membrane permeability through a viroporin-like activity or by viral budding. This is Non-structural protein P8 (Segment-10) from Bluetongue virus 10 (isolate USA) (BTV 10).